Reading from the N-terminus, the 222-residue chain is UPF0758 protein Lcho_0695 (222 aa).

One can recognise an MPN domain in the interval 100–222 (VFDSPQAVRD…VVSFAERGLL (123 aa)). Residues His-171, His-173, and Asp-184 each contribute to the Zn(2+) site. The JAMM motif motif lies at 171–184 (HNHPSGVAEPSRAD).

It belongs to the UPF0758 family.

The polypeptide is UPF0758 protein Lcho_0695 (Leptothrix cholodnii (strain ATCC 51168 / LMG 8142 / SP-6) (Leptothrix discophora (strain SP-6))).